Reading from the N-terminus, the 214-residue chain is Elongation factor Ts (214 aa).

The interval 80-83 is involved in Mg(2+) ion dislocation from EF-Tu; the sequence is TDFV.

The protein belongs to the EF-Ts family.

It is found in the cytoplasm. Functionally, associates with the EF-Tu.GDP complex and induces the exchange of GDP to GTP. It remains bound to the aminoacyl-tRNA.EF-Tu.GTP complex up to the GTP hydrolysis stage on the ribosome. The sequence is that of Elongation factor Ts from Syntrophomonas wolfei subsp. wolfei (strain DSM 2245B / Goettingen).